The following is a 438-amino-acid chain: Adenylosuccinate synthetase (438 aa).

GTP contacts are provided by residues 13–19 and 41–43; these read GDEGKGK and GHT. D14 serves as the catalytic Proton acceptor. Mg(2+) is bound by residues D14 and G41. IMP contacts are provided by residues 14 to 17, 39 to 42, T130, R144, Q225, T240, and R310; these read DEGK and NAGH. H42 serves as the catalytic Proton donor. 306-312 provides a ligand contact to substrate; it reads ATTGRLR. Residues R312, 338–340, and 421–423 each bind GTP; these read KLD and STG.

It belongs to the adenylosuccinate synthetase family. In terms of assembly, homodimer. Mg(2+) serves as cofactor.

Its subcellular location is the cytoplasm. The catalysed reaction is IMP + L-aspartate + GTP = N(6)-(1,2-dicarboxyethyl)-AMP + GDP + phosphate + 2 H(+). It functions in the pathway purine metabolism; AMP biosynthesis via de novo pathway; AMP from IMP: step 1/2. Functionally, plays an important role in the de novo pathway of purine nucleotide biosynthesis. Catalyzes the first committed step in the biosynthesis of AMP from IMP. In Vibrio parahaemolyticus serotype O3:K6 (strain RIMD 2210633), this protein is Adenylosuccinate synthetase.